A 205-amino-acid chain; its full sequence is MLTEKLILASASPRRAELLQLLGVDFEVIPSHMDETSRNDETPPEHVQRLSSEKAEMIAALFPDALVLGADTVVVIAGRMLGKPGNPGEARDMLKRLSGREHIVYTGFSLIQKKKGRRRTQVVRSAVLFKEIPEDEISWYVSSEEPYDKAGGYAVQGMGAFFIREIRGSYTNVMGLPLSEVVETLKDMGSLTFSGDQHDRGSNQE.

Asp-71 serves as the catalytic Proton acceptor.

The protein belongs to the Maf family. YhdE subfamily. A divalent metal cation is required as a cofactor.

The protein resides in the cytoplasm. It carries out the reaction dTTP + H2O = dTMP + diphosphate + H(+). The enzyme catalyses UTP + H2O = UMP + diphosphate + H(+). Its function is as follows. Nucleoside triphosphate pyrophosphatase that hydrolyzes dTTP and UTP. May have a dual role in cell division arrest and in preventing the incorporation of modified nucleotides into cellular nucleic acids. The polypeptide is dTTP/UTP pyrophosphatase (Syntrophus aciditrophicus (strain SB)).